The chain runs to 520 residues: Transactivator/viroplasmin protein (520 aa).

The segment at 487 to 520 (QDASADSGPKDGPPPTRSIVEKEDVPTTSSKQVD) is disordered.

This sequence belongs to the caulimoviridae viroplasmin family.

It is found in the host cytoplasm. Its function is as follows. Enhances the ribosomal termination-reinitiation event leading to the translation of major open reading frames on the polycistronic viral RNAs. The protein is Transactivator/viroplasmin protein of Cauliflower mosaic virus (strain CM-1841) (CaMV).